The following is a 147-amino-acid chain: MYLNTLSPNSKSHKKSKRVGRGIGSGFGKTSGRGHKGQKSRSGCKIRRGFEGGQMPLYRRIPKFGFVSLKKEKVAEVRLEDLKNFSNCIINLQFLKKTGLIKKNIKYVKIISSGSIITNILIIRNLFVSKSVRNIIESSGGKIEENN.

The segment covering 1–10 (MYLNTLSPNS) has biased composition (polar residues). The tract at residues 1 to 48 (MYLNTLSPNSKSHKKSKRVGRGIGSGFGKTSGRGHKGQKSRSGCKIRR) is disordered. A compositionally biased stretch (basic residues) spans 11–20 (KSHKKSKRVG). Over residues 21–31 (RGIGSGFGKTS) the composition is skewed to gly residues. Residues 32–47 (GRGHKGQKSRSGCKIR) are compositionally biased toward basic residues.

The protein belongs to the universal ribosomal protein uL15 family. As to quaternary structure, part of the 50S ribosomal subunit.

Its function is as follows. Binds to the 23S rRNA. The protein is Large ribosomal subunit protein uL15 of Buchnera aphidicola subsp. Baizongia pistaciae (strain Bp).